A 37-amino-acid polypeptide reads, in one-letter code: 24 kDa antigen (37 aa).

The protein is 24 kDa antigen of Plasmodium chabaudi.